A 424-amino-acid polypeptide reads, in one-letter code: CinA-like protein (424 aa).

The protein belongs to the CinA family.

The protein is CinA-like protein of Shewanella denitrificans (strain OS217 / ATCC BAA-1090 / DSM 15013).